The chain runs to 263 residues: Lens fiber major intrinsic protein (263 aa).

The Cytoplasmic segment spans residues 1 to 9 (MWELRSASF). A helical membrane pass occupies residues 10–29 (WRAIFAEFFATLFYVFFGLG). Topologically, residues 30-41 (ASLRWAPGPLHV) are extracellular. A helical transmembrane segment spans residues 42–59 (LQVALAFGLALAXLVQTV). Residues 60–61 (GH) are Cytoplasmic-facing. Positions 62–77 (ISGAHVNPAVTFXFLV) form an intramembrane region, discontinuously helical. The NPA 1 motif lies at 68–70 (NPA). At 78–82 (GSQMS) the chain is on the cytoplasmic side. Residues 83-106 (LLRAFCYMAAQLLGAVAGAAVLYS) traverse the membrane as a helical segment. Residues 107–127 (VTPPAVRGNLALNTLHAGVSV) lie on the Extracellular side of the membrane. Residues 128 to 148 (XQATTVEIFLTLQFVLCIFAT) traverse the membrane as a helical segment. At 149-156 (YDERRNGR) the chain is on the cytoplasmic side. The helical transmembrane segment at 157 to 175 (LGSVALAVGFSLTLGHLFG) threads the bilayer. Over 176-178 (MYY) the chain is Extracellular. An intramembrane region (discontinuously helical) is located at residues 179-193 (TGAGMNPARSFAPAI). The short motif at 184–186 (NPA) is the NPA 2 element. The Extracellular portion of the chain corresponds to 194–200 (LTRNFTN). A helical transmembrane segment spans residues 201 to 222 (HWVYWVGPIIGGGLGSLLYDFL). Over 223–263 (LFPRLKSVSERLSILKGTRPSDNNGQPEGTGEPVELKTQAL) the chain is Cytoplasmic. The interval 227–237 (LKSVSERLSIL) is interaction with CALM. A phosphoserine mark is found at Ser-235 and Ser-243. Residues 238 to 263 (KGTRPSDNNGQPEGTGEPVELKTQAL) are disordered. Asn-245 and Asn-246 each carry deamidated asparagine; by deterioration.

Belongs to the MIP/aquaporin (TC 1.A.8) family. In terms of assembly, homotetramer; each monomer provides an independent water pore. Two homotetramers on opposing membranes can dimerize, forming a cell-cell junction. Interacts with CALM; the calcium-calmodulin/CALM complex interacts with the cytoplasmic domains of two aquaporins, leading to channel closure. Interacts with BFSP1 (via C-terminus); prevents calcium-dependent inhibition of the water channel activity. Subject to partial proteolytic cleavage in the eye lens core. Partial proteolysis promotes interactions between tetramers from adjoining membranes. Post-translationally, fatty acylated at Met-1 and Lys-238. The acyl modifications, in decreasing order of ion abundance, are: oleoyl (C18:1) &gt; palmitoyl (C16:0) &gt; stearoyl (C18:0) &gt; eicosenoyl (C20:1) &gt; dihomo-gamma-linolenoyl (C20:3) &gt; palmitoleoyl (C16:1) &gt; eicosadienoyl (C20:2). In terms of tissue distribution, detected in eye lens (at protein level).

Its subcellular location is the cell membrane. It is found in the cell junction. The enzyme catalyses H2O(in) = H2O(out). With respect to regulation, the water channel activity is inhibited by calcium through calmodulin/CALM. Its function is as follows. Aquaporins form homotetrameric transmembrane channels, with each monomer independently mediating water transport across the plasma membrane along its osmotic gradient. Specifically expressed in lens fiber cells, this aquaporin is crucial for maintaining lens water homeostasis and transparency. Beyond water permeability, it also acts as a cell-to-cell adhesion molecule, forming thin junctions between lens fiber cells that are essential for maintaining the ordered structure and transparency of the lens. In Cavia porcellus (Guinea pig), this protein is Lens fiber major intrinsic protein.